The sequence spans 466 residues: Argininosuccinate lyase (466 aa).

The protein belongs to the lyase 1 family. Argininosuccinate lyase subfamily.

The protein localises to the cytoplasm. The enzyme catalyses 2-(N(omega)-L-arginino)succinate = fumarate + L-arginine. It functions in the pathway amino-acid biosynthesis; L-arginine biosynthesis; L-arginine from L-ornithine and carbamoyl phosphate: step 3/3. This is Argininosuccinate lyase from Bartonella tribocorum (strain CIP 105476 / IBS 506).